An 814-amino-acid polypeptide reads, in one-letter code: Rho GTPase-activating protein 44 (814 aa).

A BAR domain is found at 14-249; it reads QTVGRAEKTE…IKAQQEAWVE (236 aa). Residues 255-445 form the Rho-GAP domain; sequence KPLEEHLMIS…PIIQHADWFF (191 aa). Disordered regions lie at residues 467–493, 528–769, and 784–814; these read ANYS…RPLS, RGSS…MSTD, and STLR…STAL. Basic and acidic residues predominate over residues 479–489; that stretch reads PADRRQPEQAR. Ser493 carries the post-translational modification Phosphoserine. Composition is skewed to low complexity over residues 567–581, 598–612, 622–637, 684–704, and 741–752; these read SPAT…SGAS, SPGS…SIQG, PQPA…DQSP, SPYG…LSPA, and SVSLSASSPQST. Residues 727–814 are interaction with BST2; sequence KPRQRPTLPP…SEEESESTAL (88 aa). A compositionally biased stretch (basic and acidic residues) spans 790 to 805; that stretch reads PLEHARRHSATDKRDS. Residue Ser805 is modified to Phosphoserine. A PDZ-binding motif is present at residues 811–814; sequence STAL.

In terms of assembly, interacts with BST2 (via cytoplasmic domain). Interacts (probably via PDZ-binding motif) with SHANK3 (via PDZ domain); the interaction takes place in dendritic spines and promotes GRIA1 exocytosis. Specifically expressed in brain (at protein level). Detected in olfactory bulb, cortex, hippocampus, diencephalon and cerebellum (at protein level). Expressed in hippocampal neurons (at protein level).

Its subcellular location is the cell projection. It localises to the dendritic spine. It is found in the recycling endosome. The protein resides in the presynapse. The protein localises to the dendrite. GTPase-activating protein (GAP) that stimulates the GTPase activity of Rho-type GTPases. Thereby, controls Rho-type GTPases cycling between their active GTP-bound and inactive GDP-bound states. Acts as a GAP at least for CDC42 and RAC1. In neurons, is involved in dendritic spine formation and synaptic plasticity in a specific RAC1-GAP activity. Limits the initiation of exploratory dendritic filopodia. Recruited to actin-patches that seed filopodia, binds specifically to plasma membrane sections that are deformed inward by acto-myosin mediated contractile forces. Acts through GAP activity on RAC1 to reduce actin polymerization necessary for filopodia formation. In association with SHANK3, promotes GRIA1 exocytosis from recycling endosomes and spine morphological changes associated to long-term potentiation. The protein is Rho GTPase-activating protein 44 of Mus musculus (Mouse).